The following is a 148-amino-acid chain: Large ribosomal subunit protein bL9 (148 aa).

Belongs to the bacterial ribosomal protein bL9 family.

Functionally, binds to the 23S rRNA. This chain is Large ribosomal subunit protein bL9, found in Aliarcobacter butzleri (strain RM4018) (Arcobacter butzleri).